A 185-amino-acid chain; its full sequence is Ribosome-recycling factor (185 aa).

The protein belongs to the RRF family.

It is found in the cytoplasm. Responsible for the release of ribosomes from messenger RNA at the termination of protein biosynthesis. May increase the efficiency of translation by recycling ribosomes from one round of translation to another. The protein is Ribosome-recycling factor of Shewanella oneidensis (strain ATCC 700550 / JCM 31522 / CIP 106686 / LMG 19005 / NCIMB 14063 / MR-1).